A 327-amino-acid polypeptide reads, in one-letter code: Annexin A8 (327 aa).

Annexin repeat units lie at residues 21–92, 93–164, 177–249, and 253–324; these read FNPD…ALMY, PPYS…CLLQ, GLVL…TVVK, and NVHS…NLVG. Ca(2+) contacts are provided by Met-266, Gly-268, Gly-270, and Asp-310.

The protein belongs to the annexin family.

This protein is an anticoagulant protein that acts as an indirect inhibitor of the thromboplastin-specific complex, which is involved in the blood coagulation cascade. This is Annexin A8 (Anxa8) from Mus musculus (Mouse).